The following is a 63-amino-acid chain: Potassium channel toxin Sp4 (63 aa).

An N-terminal signal peptide occupies residues 1 to 20 (MNKVHFALFLLVLTVLAVSG). 3 cysteine pairs are disulfide-bonded: Cys-31-Cys-53, Cys-38-Cys-58, and Cys-42-Cys-60.

The protein belongs to the long chain scorpion toxin family. Class 2 subfamily. Expressed by the venom gland.

Its subcellular location is the secreted. Its function is as follows. This recombinant toxin selectively inhibits mouse voltage-gated potassium channel Kv1.3/KCNA3 (IC(50)=24.73 nM). The polypeptide is Potassium channel toxin Sp4 (Scorpiops pococki (Scorpion)).